Reading from the N-terminus, the 472-residue chain is 3-isopropylmalate dehydratase large subunit (472 aa).

[4Fe-4S] cluster is bound by residues cysteine 352, cysteine 413, and cysteine 416.

This sequence belongs to the aconitase/IPM isomerase family. LeuC type 1 subfamily. Heterodimer of LeuC and LeuD. [4Fe-4S] cluster is required as a cofactor.

It carries out the reaction (2R,3S)-3-isopropylmalate = (2S)-2-isopropylmalate. Its pathway is amino-acid biosynthesis; L-leucine biosynthesis; L-leucine from 3-methyl-2-oxobutanoate: step 2/4. Catalyzes the isomerization between 2-isopropylmalate and 3-isopropylmalate, via the formation of 2-isopropylmaleate. In Laribacter hongkongensis (strain HLHK9), this protein is 3-isopropylmalate dehydratase large subunit.